The following is a 206-amino-acid chain: Thiamine-phosphate synthase (206 aa).

4-amino-2-methyl-5-(diphosphooxymethyl)pyrimidine is bound by residues 35-39 (QLRHK) and N67. The Mg(2+) site is built by D68 and D87. 4-amino-2-methyl-5-(diphosphooxymethyl)pyrimidine is bound at residue S106. Residue 132 to 134 (TGS) coordinates 2-[(2R,5Z)-2-carboxy-4-methylthiazol-5(2H)-ylidene]ethyl phosphate. 4-amino-2-methyl-5-(diphosphooxymethyl)pyrimidine is bound at residue K135. G163 contributes to the 2-[(2R,5Z)-2-carboxy-4-methylthiazol-5(2H)-ylidene]ethyl phosphate binding site.

The protein belongs to the thiamine-phosphate synthase family. The cofactor is Mg(2+).

The enzyme catalyses 2-[(2R,5Z)-2-carboxy-4-methylthiazol-5(2H)-ylidene]ethyl phosphate + 4-amino-2-methyl-5-(diphosphooxymethyl)pyrimidine + 2 H(+) = thiamine phosphate + CO2 + diphosphate. It carries out the reaction 2-(2-carboxy-4-methylthiazol-5-yl)ethyl phosphate + 4-amino-2-methyl-5-(diphosphooxymethyl)pyrimidine + 2 H(+) = thiamine phosphate + CO2 + diphosphate. It catalyses the reaction 4-methyl-5-(2-phosphooxyethyl)-thiazole + 4-amino-2-methyl-5-(diphosphooxymethyl)pyrimidine + H(+) = thiamine phosphate + diphosphate. It participates in cofactor biosynthesis; thiamine diphosphate biosynthesis; thiamine phosphate from 4-amino-2-methyl-5-diphosphomethylpyrimidine and 4-methyl-5-(2-phosphoethyl)-thiazole: step 1/1. Condenses 4-methyl-5-(beta-hydroxyethyl)thiazole monophosphate (THZ-P) and 2-methyl-4-amino-5-hydroxymethyl pyrimidine pyrophosphate (HMP-PP) to form thiamine monophosphate (TMP). The protein is Thiamine-phosphate synthase of Chlorobium phaeobacteroides (strain DSM 266 / SMG 266 / 2430).